Reading from the N-terminus, the 337-residue chain is Retrovirus-related Pol polyprotein from type-1 retrotransposable element R1 (337 aa).

Residues 1–118 (GCPQGSISGP…KSARYLGVCM (118 aa)) form the Reverse transcriptase domain. The tract at residues 253–337 (KRARSCKLMK…ACPCGAPRED (85 aa)) is nucleic acid-binding endonuclease.

It carries out the reaction DNA(n) + a 2'-deoxyribonucleoside 5'-triphosphate = DNA(n+1) + diphosphate. In Nasonia vitripennis (Parasitic wasp), this protein is Retrovirus-related Pol polyprotein from type-1 retrotransposable element R1.